The primary structure comprises 97 residues: Putative defensin-like protein 227 (97 aa).

Residues 1–26 (MKWATLFMVSCVLMFFVMNNINEVES) form the signal peptide. Intrachain disulfides connect C35–C97, C45–C76, C53–C91, and C74–C93.

This sequence belongs to the DEFL family.

It localises to the secreted. The chain is Putative defensin-like protein 227 (SCRL28) from Arabidopsis thaliana (Mouse-ear cress).